The primary structure comprises 308 residues: SAP30-binding protein (308 aa).

The interval 15–101 (AEDSEPESDG…EAEKRDPQEL (87 aa)) is disordered. A compositionally biased stretch (acidic residues) spans 16–26 (EDSEPESDGEA). Ser-18, Ser-22, Ser-43, and Ser-52 each carry phosphoserine. Acidic residues predominate over residues 57–78 (DEDGYEEEEDENSRQSEDDDSE). The span at 79-99 (TEKPEADDPKDNTEAEKRDPQ) shows a compositional bias: basic and acidic residues. Lys-95 participates in a covalent cross-link: Glycyl lysine isopeptide (Lys-Gly) (interchain with G-Cter in SUMO2). Residue Ser-113 is modified to Phosphoserine. Glycyl lysine isopeptide (Lys-Gly) (interchain with G-Cter in SUMO2) cross-links involve residues Lys-220, Lys-304, and Lys-305.

This sequence belongs to the HCNGP family. Interacts with histone deacetylase complex subunit SAP30.

It localises to the nucleus. Its function is as follows. Plays a role in transcriptional repression by promoting histone deacetylase activity, leading to deacetylation of histone H3. May be involved in the regulation of beta-2-microglobulin genes. Functionally, (Microbial infection) Involved in transcriptional repression of HHV-1 genes TK and gC. This is SAP30-binding protein from Homo sapiens (Human).